The sequence spans 408 residues: Imidazolonepropionase (408 aa).

Histidine 73 and histidine 75 together coordinate Fe(3+). 2 residues coordinate Zn(2+): histidine 73 and histidine 75. 3 residues coordinate 4-imidazolone-5-propanoate: arginine 82, tyrosine 145, and histidine 178. Residue tyrosine 145 participates in N-formimidoyl-L-glutamate binding. Histidine 243 contributes to the Fe(3+) binding site. Histidine 243 is a binding site for Zn(2+). Glutamine 246 is a binding site for 4-imidazolone-5-propanoate. Residue aspartate 318 coordinates Fe(3+). Aspartate 318 contributes to the Zn(2+) binding site. The N-formimidoyl-L-glutamate site is built by asparagine 320 and glycine 322. Serine 323 is a 4-imidazolone-5-propanoate binding site.

The protein belongs to the metallo-dependent hydrolases superfamily. HutI family. It depends on Zn(2+) as a cofactor. The cofactor is Fe(3+).

It is found in the cytoplasm. It carries out the reaction 4-imidazolone-5-propanoate + H2O = N-formimidoyl-L-glutamate. It functions in the pathway amino-acid degradation; L-histidine degradation into L-glutamate; N-formimidoyl-L-glutamate from L-histidine: step 3/3. In terms of biological role, catalyzes the hydrolytic cleavage of the carbon-nitrogen bond in imidazolone-5-propanoate to yield N-formimidoyl-L-glutamate. It is the third step in the universal histidine degradation pathway. This chain is Imidazolonepropionase, found in Shewanella sp. (strain ANA-3).